Reading from the N-terminus, the 44-residue chain is Large ribosomal subunit protein bL36 (44 aa).

This sequence belongs to the bacterial ribosomal protein bL36 family.

In Pseudoalteromonas translucida (strain TAC 125), this protein is Large ribosomal subunit protein bL36.